The following is a 277-amino-acid chain: Probable xyloglucan endotransglucosylase/hydrolase protein 11 (277 aa).

A signal peptide spans 1 to 24 (MRGSDQKILLMVMVVVAVVAAAQG). In terms of domain architecture, GH16 spans 32–209 (VTWGNNYYQT…PKQMPYIAKF (178 aa)). Asparagine 50 carries N-linked (GlcNAc...) asparagine glycosylation. Glutamate 107 acts as the Nucleophile in catalysis. Residues 123-125 (NTN) and 133-135 (GKD) each bind xyloglucan. A glycan (N-linked (GlcNAc...) asparagine) is linked at asparagine 194. Intrachain disulfides connect cysteine 217-cysteine 227 and cysteine 260-cysteine 273. Arginine 265 contacts xyloglucan.

This sequence belongs to the glycosyl hydrolase 16 family. XTH group 1 subfamily. Contains at least one intrachain disulfide bond essential for its enzymatic activity.

It localises to the secreted. Its subcellular location is the cell wall. It is found in the extracellular space. The protein localises to the apoplast. The catalysed reaction is breaks a beta-(1-&gt;4) bond in the backbone of a xyloglucan and transfers the xyloglucanyl segment on to O-4 of the non-reducing terminal glucose residue of an acceptor, which can be a xyloglucan or an oligosaccharide of xyloglucan.. May catalyze xyloglucan endohydrolysis (XEH) and/or endotransglycosylation (XET). Cleaves and religates xyloglucan polymers, an essential constituent of the primary cell wall, and thereby participates in cell wall construction of growing tissues. The sequence is that of Probable xyloglucan endotransglucosylase/hydrolase protein 11 (XTH11) from Arabidopsis thaliana (Mouse-ear cress).